The sequence spans 1461 residues: Pleiotropic drug resistance protein 2 (1461 aa).

One can recognise an ABC transporter 1 domain in the interval 172–445 (LGLIHLSPSK…FEYMGFRCPE (274 aa)). 205-212 (GPPGSGKT) contacts ATP. An ABC transmembrane type-2 1 domain is found at 523–736 (ELFKSCFTRE…GQNAIAINEF (214 aa)). 6 helical membrane passes run 541-561 (FLYI…LTVF), 577-597 (FWGA…QELA), 622-642 (LPIW…WIIL), 660-680 (LLAF…IAAA), 685-705 (VVAN…GGFI), and 771-791 (ISIG…IAAL). One can recognise an ABC transporter 2 domain in the interval 859 to 1111 (LAFNHVNYYV…KLVEYFETIP (253 aa)). Residue 904-911 (GVSGAGKT) coordinates ATP. The 215-residue stretch at 1184-1398 (TQCKACFWKQ…TIYGIFASQV (215 aa)) folds into the ABC transmembrane type-2 2 domain. Helical transmembrane passes span 1203-1223 (YNAI…VIFW), 1243-1263 (YAAV…VVAI), 1291-1311 (TIYV…MIGY), 1321-1341 (FYYF…MVVA), 1348-1368 (IAAI…GFLI), 1379-1399 (WYYW…SQVG), and 1430-1450 (FLLV…FVFA).

It belongs to the ABC transporter superfamily. ABCG family. PDR (TC 3.A.1.205) subfamily.

Its subcellular location is the membrane. May be a general defense protein. In Nicotiana plumbaginifolia (Leadwort-leaved tobacco), this protein is Pleiotropic drug resistance protein 2 (PDR2).